The chain runs to 289 residues: 5'-3' exonuclease (289 aa).

In terms of domain architecture, 5'-3' exonuclease spans 166–256 (VEPQKIPDYL…EEDLKIKRPD (91 aa)).

In terms of biological role, 5'-3' exonuclease acting preferentially on double-stranded DNA. The chain is 5'-3' exonuclease from Aquifex aeolicus (strain VF5).